The following is a 911-amino-acid chain: Facilitated trehalose transporter Tret1 (911 aa).

Residues M1–T256 form a disordered region. Residues M1–Y446 lie on the Cytoplasmic side of the membrane. The segment covering G8–G19 has biased composition (gly residues). The span at K32–E50 shows a compositional bias: basic and acidic residues. 3 stretches are compositionally biased toward low complexity: residues S51–T64, A76–R129, and Q156–Q166. Residues S302, S303, and S304 each carry the phosphoserine modification. A disordered region spans residues V334–I355. A phosphoserine mark is found at S374 and S376. The interval F380 to R402 is disordered. A compositionally biased stretch (polar residues) spans R384–T395. Residues I447–A467 form a helical membrane-spanning segment. The Extracellular segment spans residues S468–S494. N-linked (GlcNAc...) asparagine glycosylation occurs at N482. The helical transmembrane segment at W495–I515 threads the bilayer. At E516–T527 the chain is on the cytoplasmic side. The helical transmembrane segment at A528–L548 threads the bilayer. Residues C549 to R551 are Extracellular-facing. A helical membrane pass occupies residues F552–T572. Over V573–R578 the chain is Cytoplasmic. A helical membrane pass occupies residues G579–A599. The Extracellular segment spans residues G600–S606. A helical membrane pass occupies residues M607–P627. Over E628 to P690 the chain is Cytoplasmic. The helical transmembrane segment at L691 to F711 threads the bilayer. Residues Y712–N727 are Extracellular-facing. Residues V728 to I748 form a helical membrane-spanning segment. Over D749 to K754 the chain is Cytoplasmic. Residues V755–F775 traverse the membrane as a helical segment. At Y776–C794 the chain is on the extracellular side. A helical transmembrane segment spans residues F795–G815. Topologically, residues E816 to K821 are cytoplasmic. Residues I822–T842 traverse the membrane as a helical segment. The Extracellular portion of the chain corresponds to K843–H855. A helical transmembrane segment spans residues G856–V876. Residues P877–M911 are Cytoplasmic-facing. Phosphoserine is present on residues S899 and S900.

The protein belongs to the major facilitator superfamily. Sugar transporter (TC 2.A.1.1) family. Trehalose transporter subfamily.

Its subcellular location is the cell membrane. In terms of biological role, low-capacity facilitative transporter for trehalose. Does not transport maltose, sucrose or lactose. Mediates the bidirectional transfer of trehalose. Responsible for the transport of trehalose synthesized in the fat body and the incorporation of trehalose into other tissues that require a carbon source, thereby regulating trehalose levels in the hemolymph. The polypeptide is Facilitated trehalose transporter Tret1 (Drosophila virilis (Fruit fly)).